We begin with the raw amino-acid sequence, 991 residues long: Bone morphogenetic protein 1 (991 aa).

An N-terminal signal peptide occupies residues 1-25 (MPGVARPPLPLLSLPLLLLLLLLPR). The propeptide occupies 26–125 (AGRPLDLADY…RWRGRPRSRR (100 aa)). The disordered stretch occupies residues 86–131 (ARRPSIKAAGNSSALGGQGTSGQPQRESRGRWRGRPRSRRAATSRP). A compositionally biased stretch (polar residues) spans 95 to 110 (GNSSALGGQGTSGQPQ). N96 carries an N-linked (GlcNAc...) asparagine glycan. The span at 116 to 127 (RWRGRPRSRRAA) shows a compositional bias: basic residues. One can recognise a Peptidase M12A domain in the interval 126-325 (AATSRPERVW…AQARKLYKCP (200 aa)). An N-linked (GlcNAc...) asparagine glycan is attached at N147. Intrachain disulfides connect C168/C324, C188/C210, C190/C191, and C327/C353. Zn(2+) is bound at residue H218. Residue E219 is part of the active site. The Zn(2+) site is built by H222 and H228. CUB domains lie at 327 to 439 (CGET…YEAI) and 440 to 551 (CGGD…NFFK). Residues N337 and N368 are each glycosylated (N-linked (GlcNAc...) asparagine). Disulfide bonds link C380/C402, C440/C466, C493/C515, C556/C568, C564/C577, C579/C592, C596/C622, C649/C671, C712/C723, C719/C732, C734/C747, C752/C778, C805/C827, C865/C895, and C922/C944. Positions 552-593 (EVDECSRPNRGGCEQRCLNTLGSYKCSCDPGYELAPDKRRCE) constitute an EGF-like 1; calcium-binding domain. In terms of domain architecture, CUB 3 spans 596–707 (CGGFLTKLNG…KKGFKAHFFS (112 aa)). N-linked (GlcNAc...) asparagine glycosylation is present at N604. The EGF-like 2; calcium-binding domain maps to 708–748 (DKDECSKDNGGCQQDCVNTFGSYECQCRSGFVLHDNKHDCK). CUB domains lie at 752 to 864 (CEHK…HSTE) and 865 to 981 (CGGQ…YTST). 2 positions are modified to omega-N-methylarginine: R939 and R942.

In terms of assembly, interacts with POSTN, the interaction promotes deposition on the extracellular matrix. Zn(2+) is required as a cofactor. In terms of tissue distribution, at high levels in embryonic maternal deciduum and floor plate region of the neural tube. Less in developing membranous and endochondral bone, submucosa of intestine, dermis of skin and the mesenchyme of spleen and lung.

It localises to the golgi apparatus. It is found in the trans-Golgi network. The protein localises to the secreted. The protein resides in the extracellular space. Its subcellular location is the extracellular matrix. It catalyses the reaction Cleavage of the C-terminal propeptide at Ala-|-Asp in type I and II procollagens and at Arg-|-Asp in type III.. Activity is increased by the procollagen C-endopeptidase enhancer protein. Functionally, metalloprotease that plays key roles in regulating the formation of the extracellular matrix (ECM) via processing of various precursor proteins into mature functional enzymes or structural proteins. Thereby participates in several developmental and physiological processes such as cartilage and bone formation, muscle growth and homeostasis, wound healing and tissue repair. Roles in ECM formation include cleavage of the C-terminal propeptides from procollagens such as procollagen I, II and III or the proteolytic activation of the enzyme lysyl oxidase LOX, necessary to formation of covalent cross-links in collagen and elastic fibers. Additional substrates include matricellular thrombospondin-1/THBS1 whose cleavage leads to cell adhesion disruption and TGF-beta activation. The chain is Bone morphogenetic protein 1 (Bmp1) from Mus musculus (Mouse).